The sequence spans 264 residues: Thymidylate synthase (264 aa).

Residues arginine 21 and arginine 126–arginine 127 each bind dUMP. The active-site Nucleophile is the cysteine 146. DUMP is bound by residues arginine 166–aspartate 169, asparagine 177, and histidine 207–tyrosine 209. Aspartate 169 contributes to the (6R)-5,10-methylene-5,6,7,8-tetrahydrofolate binding site. Alanine 263 lines the (6R)-5,10-methylene-5,6,7,8-tetrahydrofolate pocket.

This sequence belongs to the thymidylate synthase family. Bacterial-type ThyA subfamily. Homodimer.

It localises to the cytoplasm. The enzyme catalyses dUMP + (6R)-5,10-methylene-5,6,7,8-tetrahydrofolate = 7,8-dihydrofolate + dTMP. It functions in the pathway pyrimidine metabolism; dTTP biosynthesis. Its function is as follows. Catalyzes the reductive methylation of 2'-deoxyuridine-5'-monophosphate (dUMP) to 2'-deoxythymidine-5'-monophosphate (dTMP) while utilizing 5,10-methylenetetrahydrofolate (mTHF) as the methyl donor and reductant in the reaction, yielding dihydrofolate (DHF) as a by-product. This enzymatic reaction provides an intracellular de novo source of dTMP, an essential precursor for DNA biosynthesis. This Bradyrhizobium diazoefficiens (strain JCM 10833 / BCRC 13528 / IAM 13628 / NBRC 14792 / USDA 110) protein is Thymidylate synthase.